The primary structure comprises 473 residues: NADH-quinone oxidoreductase subunit N (473 aa).

14 helical membrane passes run 3–23 (LHYL…LVIA), 30–50 (LAFY…CSLL), 62–82 (FSSM…FLWL), 99–119 (FYLL…SEHF), 120–140 (ASFF…IAYS), 153–173 (YLIL…IVYL), 195–215 (MLFT…LSLV), 230–252 (LPTT…WKLF), 262–282 (IVLT…NLLA), 291–311 (ILAF…FLFN), 326–346 (ALLF…SILM), 368–388 (AASL…LGFM), 408–428 (FLVI…MVML), and 444–464 (VASL…PALF).

It belongs to the complex I subunit 2 family. As to quaternary structure, NDH-1 is composed of 13 different subunits. Subunits NuoA, H, J, K, L, M, N constitute the membrane sector of the complex.

The protein localises to the cell inner membrane. The enzyme catalyses a quinone + NADH + 5 H(+)(in) = a quinol + NAD(+) + 4 H(+)(out). In terms of biological role, NDH-1 shuttles electrons from NADH, via FMN and iron-sulfur (Fe-S) centers, to quinones in the respiratory chain. The immediate electron acceptor for the enzyme in this species is believed to be ubiquinone. Couples the redox reaction to proton translocation (for every two electrons transferred, four hydrogen ions are translocated across the cytoplasmic membrane), and thus conserves the redox energy in a proton gradient. This is NADH-quinone oxidoreductase subunit N from Shewanella woodyi (strain ATCC 51908 / MS32).